A 557-amino-acid chain; its full sequence is 2-isopropylmalate synthase (557 aa).

The Pyruvate carboxyltransferase domain occupies Pro33–Asp307. Residues Asp42, His246, His248, and Asn282 each coordinate Mg(2+). The regulatory domain stretch occupies residues Ala439–Ala557.

It belongs to the alpha-IPM synthase/homocitrate synthase family. LeuA type 2 subfamily. As to quaternary structure, homodimer. It depends on Mg(2+) as a cofactor.

It localises to the cytoplasm. The catalysed reaction is 3-methyl-2-oxobutanoate + acetyl-CoA + H2O = (2S)-2-isopropylmalate + CoA + H(+). Its pathway is amino-acid biosynthesis; L-leucine biosynthesis; L-leucine from 3-methyl-2-oxobutanoate: step 1/4. Functionally, catalyzes the condensation of the acetyl group of acetyl-CoA with 3-methyl-2-oxobutanoate (2-ketoisovalerate) to form 3-carboxy-3-hydroxy-4-methylpentanoate (2-isopropylmalate). The polypeptide is 2-isopropylmalate synthase (Azotobacter vinelandii (strain DJ / ATCC BAA-1303)).